Reading from the N-terminus, the 355-residue chain is Elongation factor Ts (355 aa).

The tract at residues 82–85 (TDFV) is involved in Mg(2+) ion dislocation from EF-Tu.

Belongs to the EF-Ts family.

It localises to the cytoplasm. Its function is as follows. Associates with the EF-Tu.GDP complex and induces the exchange of GDP to GTP. It remains bound to the aminoacyl-tRNA.EF-Tu.GTP complex up to the GTP hydrolysis stage on the ribosome. The polypeptide is Elongation factor Ts (Helicobacter pylori (strain HPAG1)).